The sequence spans 147 residues: Submaxillary gland androgen-regulated protein 3A (147 aa).

An N-terminal signal peptide occupies residues M1–C22. Positions R27–D128 are disordered. Residues G33–P105 are compositionally biased toward pro residues. 3 repeat units span residues G43 to F54, G55 to F66, and G67 to P78. Residues G43 to P78 are 3 X 12 AA tandem repeats of G-P-G-I-G-R-P-[HP]-P-P-P-[PF]. Over residues T108–R127 the composition is skewed to polar residues.

The protein belongs to the PROL1/PROL3 family. As to expression, secreted into saliva by submaxillary gland.

The protein resides in the secreted. Functionally, may play a role in protection or detoxification. The sequence is that of Submaxillary gland androgen-regulated protein 3A (Smr3a) from Mus musculus (Mouse).